Consider the following 380-residue polypeptide: Queuine tRNA-ribosyltransferase (380 aa).

Asp93 acts as the Proton acceptor in catalysis. Residues 93-97 (DSGGF), Asp147, Gln198, and Gly225 each bind substrate. Positions 256–262 (GVGLPSN) are RNA binding. Residue Asp275 is the Nucleophile of the active site. The RNA binding; important for wobble base 34 recognition stretch occupies residues 280-284 (ARNGR). 4 residues coordinate Zn(2+): Cys313, Cys315, Cys318, and His344.

The protein belongs to the queuine tRNA-ribosyltransferase family. In terms of assembly, homodimer. Within each dimer, one monomer is responsible for RNA recognition and catalysis, while the other monomer binds to the replacement base PreQ1. Zn(2+) is required as a cofactor.

The catalysed reaction is 7-aminomethyl-7-carbaguanine + guanosine(34) in tRNA = 7-aminomethyl-7-carbaguanosine(34) in tRNA + guanine. Its pathway is tRNA modification; tRNA-queuosine biosynthesis. Functionally, catalyzes the base-exchange of a guanine (G) residue with the queuine precursor 7-aminomethyl-7-deazaguanine (PreQ1) at position 34 (anticodon wobble position) in tRNAs with GU(N) anticodons (tRNA-Asp, -Asn, -His and -Tyr). Catalysis occurs through a double-displacement mechanism. The nucleophile active site attacks the C1' of nucleotide 34 to detach the guanine base from the RNA, forming a covalent enzyme-RNA intermediate. The proton acceptor active site deprotonates the incoming PreQ1, allowing a nucleophilic attack on the C1' of the ribose to form the product. After dissociation, two additional enzymatic reactions on the tRNA convert PreQ1 to queuine (Q), resulting in the hypermodified nucleoside queuosine (7-(((4,5-cis-dihydroxy-2-cyclopenten-1-yl)amino)methyl)-7-deazaguanosine). This is Queuine tRNA-ribosyltransferase from Clostridium perfringens (strain 13 / Type A).